A 201-amino-acid polypeptide reads, in one-letter code: Holliday junction resolvase RecU (201 aa).

Residues Thr-85, Asp-87, Asp-100, and Gln-119 each contribute to the Mg(2+) site.

The protein belongs to the RecU family. The cofactor is Mg(2+).

The protein localises to the cytoplasm. The catalysed reaction is Endonucleolytic cleavage at a junction such as a reciprocal single-stranded crossover between two homologous DNA duplexes (Holliday junction).. Endonuclease that resolves Holliday junction intermediates in genetic recombination. Cleaves mobile four-strand junctions by introducing symmetrical nicks in paired strands. Promotes annealing of linear ssDNA with homologous dsDNA. Required for DNA repair, homologous recombination and chromosome segregation. This is Holliday junction resolvase RecU from Pediococcus pentosaceus (strain ATCC 25745 / CCUG 21536 / LMG 10740 / 183-1w).